Consider the following 115-residue polypeptide: Nitrogenase-stabilizing/protective protein NifW (115 aa).

This sequence belongs to the NifW family. As to quaternary structure, homotrimer; associates with NifD.

May protect the nitrogenase Fe-Mo protein from oxidative damage. The sequence is that of Nitrogenase-stabilizing/protective protein NifW from Methylobacterium sp. (strain 4-46).